A 447-amino-acid chain; its full sequence is Phosphoglucosamine mutase (447 aa).

Serine 100 functions as the Phosphoserine intermediate in the catalytic mechanism. The Mg(2+) site is built by serine 100, aspartate 240, aspartate 242, and aspartate 244. Serine 100 is modified (phosphoserine).

Belongs to the phosphohexose mutase family. Mg(2+) is required as a cofactor. In terms of processing, activated by phosphorylation.

It catalyses the reaction alpha-D-glucosamine 1-phosphate = D-glucosamine 6-phosphate. Functionally, catalyzes the conversion of glucosamine-6-phosphate to glucosamine-1-phosphate. This Clostridium botulinum (strain Alaska E43 / Type E3) protein is Phosphoglucosamine mutase.